The sequence spans 720 residues: NADH-ubiquinone oxidoreductase 78 kDa subunit, mitochondrial (720 aa).

The N-terminal 23 residues, 1 to 23 (MNSIKSHILRSSKRYISASSKRL), are a transit peptide targeting the mitochondrion. A 2Fe-2S ferredoxin-type domain is found at 24–102 (AEVEVTVDGR…GMVVHTDSER (79 aa)). Positions 58, 69, 72, and 86 each coordinate [2Fe-2S] cluster. The 4Fe-4S His(Cys)3-ligated-type domain maps to 102–141 (RIKKAREGVTEMLLENHPLDCPVCDQGGECDLQEQSQRYG). One can recognise a 4Fe-4S Mo/W bis-MGD-type domain in the interval 241–297 (LKRTETIDVLDAVGSNIRVDTRGIEVMRVLPRLNDDVNEEWISDKTRFACDGLKTQR).

The protein belongs to the complex I 75 kDa subunit family. As to quaternary structure, core subunit of respiratory chain NADH dehydrogenase (Complex I) which is composed of 45 different subunits. This is the largest subunit of complex I and it is a component of the iron-sulfur (IP) fragment of the enzyme. The cofactor is [2Fe-2S] cluster. Requires [4Fe-4S] cluster as cofactor.

Its subcellular location is the mitochondrion. The enzyme catalyses a ubiquinone + NADH + 5 H(+)(in) = a ubiquinol + NAD(+) + 4 H(+)(out). In terms of biological role, core subunit of the mitochondrial membrane respiratory chain NADH dehydrogenase (Complex I) which catalyzes electron transfer from NADH through the respiratory chain, using ubiquinone as an electron acceptor. Essential for catalysing the entry and efficient transfer of electrons within complex I. Plays a key role in the assembly and stability of complex I and participates in the association of complex I with ubiquinol-cytochrome reductase complex (Complex III) to form supercomplexes. Plays a role in cell wall integrity and is involved in osmotic and oxidative resistance, yeast to hypha transition, and the ability to damage and invade oral epithelial cells. The sequence is that of NADH-ubiquinone oxidoreductase 78 kDa subunit, mitochondrial from Candida albicans (strain SC5314 / ATCC MYA-2876) (Yeast).